We begin with the raw amino-acid sequence, 815 residues long: Protein-glutamine gamma-glutamyltransferase K (815 aa).

Disordered regions lie at residues 1-40 (MDGP…RRGG) and 59-100 (DDWG…AAGD). Pro residues predominate over residues 16–25 (WQPPTTPSPE). Residue T21 is modified to Phosphothreonine. 5 positions are modified to phosphoserine: S23, S80, S83, S90, and S93. The segment covering 59–87 (DDWGPEPHRDRGSGSGRRRPDSRGSDSRR) has biased composition (basic and acidic residues). Active-site residues include C375, H434, and D457. Residues N497, D499, E546, and E551 each coordinate Ca(2+). The interval 795–815 (SNAGGNSPLGETIPMASRGGA) is disordered.

The protein belongs to the transglutaminase superfamily. Transglutaminase family. As to quaternary structure, interacts with PLAAT4. Ca(2+) serves as cofactor. Palmitoylated. In terms of processing, the membrane anchorage region possesses a cluster of five cysteines within which fatty acid(s) may become thioester-linked. It is subject to phorbol ester-stimulated phosphorylation and is hypersensitive to proteolysis, which releases the enzyme in a soluble form. Post-translationally, tyrosine-phosphorylated.

It localises to the membrane. The enzyme catalyses L-glutaminyl-[protein] + L-lysyl-[protein] = [protein]-L-lysyl-N(6)-5-L-glutamyl-[protein] + NH4(+). Catalyzes the cross-linking of proteins and the conjugation of polyamines to proteins. Responsible for cross-linking epidermal proteins during formation of the stratum corneum. Involved in cell proliferation. This is Protein-glutamine gamma-glutamyltransferase K (TGM1) from Canis lupus familiaris (Dog).